We begin with the raw amino-acid sequence, 213 residues long: Hemolysin-3 homolog (213 aa).

The next 7 helical transmembrane spans lie at Ala11–Phe31, Ile41–Leu61, Ile75–Gly95, Phe103–Phe123, Phe127–Lys147, Gly157–Trp177, and Ala185–Tyr205.

The protein belongs to the UPF0073 (Hly-III) family.

It is found in the cell membrane. This Bacillus subtilis (strain 168) protein is Hemolysin-3 homolog (yplQ).